A 345-amino-acid polypeptide reads, in one-letter code: 3-dehydroquinate synthase (345 aa).

NAD(+) contacts are provided by residues 62–67 (DGEEYK), 96–100 (GVISD), 120–121 (TT), K133, K142, and 160–163 (FLKT). E175, H233, and H250 together coordinate Zn(2+).

This sequence belongs to the sugar phosphate cyclases superfamily. Dehydroquinate synthase family. Co(2+) is required as a cofactor. Zn(2+) serves as cofactor. It depends on NAD(+) as a cofactor.

The protein resides in the cytoplasm. It catalyses the reaction 7-phospho-2-dehydro-3-deoxy-D-arabino-heptonate = 3-dehydroquinate + phosphate. It functions in the pathway metabolic intermediate biosynthesis; chorismate biosynthesis; chorismate from D-erythrose 4-phosphate and phosphoenolpyruvate: step 2/7. In terms of biological role, catalyzes the conversion of 3-deoxy-D-arabino-heptulosonate 7-phosphate (DAHP) to dehydroquinate (DHQ). The sequence is that of 3-dehydroquinate synthase from Campylobacter concisus (strain 13826).